The following is a 215-amino-acid chain: Cardiolipin synthase (CMP-forming) (215 aa).

5 consecutive transmembrane segments (helical) span residues 29 to 49 (IPNI…WLIL), 60 to 80 (GWAL…GKLA), 117 to 137 (LWLT…VGIL), 158 to 178 (LMYA…ASLA), and 179 to 199 (AVFG…AGVL).

The protein belongs to the CDP-alcohol phosphatidyltransferase class-I family. A divalent metal cation is required as a cofactor.

The protein resides in the cell membrane. It catalyses the reaction a CDP-1,2-diacyl-sn-glycerol + a 1,2-diacyl-sn-glycero-3-phospho-(1'-sn-glycerol) = a cardiolipin + CMP + H(+). Functionally, catalyzes the synthesis of cardiolipin (CL) (diphosphatidylglycerol) by specifically transferring a phosphatidyl group from CDP-diacylglycerol to phosphatidylglycerol (PG). This Streptomyces coelicolor (strain ATCC BAA-471 / A3(2) / M145) protein is Cardiolipin synthase (CMP-forming).